A 578-amino-acid polypeptide reads, in one-letter code: Raftlin (578 aa).

G2 carries N-myristoyl glycine lipidation. A lipid anchor (S-palmitoyl cysteine) is attached at C3. Residues 169–184 (VNSAGSSAPVSTANST) show a composition bias toward polar residues. Disordered stretches follow at residues 169–271 (VNSA…VHEE), 449–525 (FSRE…PGGL), and 551–578 (CTGHSNPGEDARDGDAEEVRELGTVEEN). S183, S199, and S220 each carry phosphoserine. The segment covering 185-206 (EDARDAKNARGDHASLENEKPG) has biased composition (basic and acidic residues). The segment covering 457–466 (RQMRKSKGKL) has biased composition (basic residues). The segment covering 467-485 (SARDKQQAEENEKNLEDQS) has biased composition (basic and acidic residues). S505 is modified (phosphoserine). Composition is skewed to basic and acidic residues over residues 506–518 (EEMKGPVQEDKGE) and 557–578 (PGEDARDGDAEEVRELGTVEEN).

The protein belongs to the raftlin family. As to quaternary structure, interacts with TLR4; the interaction occurs in response to lipopolysaccharide stimulation. Interacts with CLTC; the interaction occurs in response to pathogens. Interacts with AP2A1 and AP2B1. As to expression, expressed in B-cells (at protein level). Expressed in dendritic cells and macrophages.

It is found in the cell membrane. Its subcellular location is the cytoplasm. It localises to the membrane raft. The protein resides in the endosome. The protein localises to the early endosome. Its function is as follows. Involved in protein trafficking via association with clathrin and AP2 complex. Upon bacterial lipopolysaccharide stimulation, mediates internalization of TLR4 to endosomes in dendritic cells and macrophages; and internalization of poly(I:C) to TLR3-positive endosomes in myeloid dendritic cells and epithelial cells; resulting in activation of TICAM1-mediated signaling and subsequent IFNB1 production. Involved in T-cell antigen receptor-mediated signaling by regulating tyrosine kinase LCK localization, T-cell dependent antibody production and cytokine secretion. May regulate B-cell antigen receptor-mediated signaling. May play a pivotal role in the formation and/or maintenance of lipid rafts. In Homo sapiens (Human), this protein is Raftlin (RFTN1).